The following is a 923-amino-acid chain: Protein dct-6 (923 aa).

A coiled-coil region spans residues 312-347; sequence DMNDQIEQMISLLVDELSELEKLEQLCKEVERTGNQ.

In terms of biological role, may have a role in tumor suppression. This is Protein dct-6 (dct-6) from Caenorhabditis elegans.